Here is a 674-residue protein sequence, read N- to C-terminus: UvrABC system protein B (674 aa).

The Helicase ATP-binding domain maps to 26 to 183 (EGLEDGLAHQ…RRLAELQYTR (158 aa)). 39 to 46 (GVTGSGKT) is a binding site for ATP. Residues 92 to 115 (YYDYYQPEAYVPSSDTFIEKDASV) carry the Beta-hairpin motif. Residues 431 to 597 (QVDDLLSEIR…GLNKKISDIL (167 aa)) enclose the Helicase C-terminal domain. Positions 634 to 669 (QKRIHQLEAQMQQHAQNLEFEEAAQVRDQLHQVREL) constitute a UVR domain.

Belongs to the UvrB family. In terms of assembly, forms a heterotetramer with UvrA during the search for lesions. Interacts with UvrC in an incision complex.

Its subcellular location is the cytoplasm. The UvrABC repair system catalyzes the recognition and processing of DNA lesions. A damage recognition complex composed of 2 UvrA and 2 UvrB subunits scans DNA for abnormalities. Upon binding of the UvrA(2)B(2) complex to a putative damaged site, the DNA wraps around one UvrB monomer. DNA wrap is dependent on ATP binding by UvrB and probably causes local melting of the DNA helix, facilitating insertion of UvrB beta-hairpin between the DNA strands. Then UvrB probes one DNA strand for the presence of a lesion. If a lesion is found the UvrA subunits dissociate and the UvrB-DNA preincision complex is formed. This complex is subsequently bound by UvrC and the second UvrB is released. If no lesion is found, the DNA wraps around the other UvrB subunit that will check the other stand for damage. This chain is UvrABC system protein B, found in Erwinia tasmaniensis (strain DSM 17950 / CFBP 7177 / CIP 109463 / NCPPB 4357 / Et1/99).